The following is a 285-amino-acid chain: Eukaryotic translation initiation factor 3 subunit J (285 aa).

Disordered stretches follow at residues 1 to 86 and 232 to 285; these read MSWD…QLDE and QARL…DDFM. Residues 22-41 show a composition bias toward acidic residues; the sequence is WEDEEDDGPVLESWDVDPEE. Positions 36-81 form a coiled coil; that stretch reads DVDPEEEEKKKKEAKLQEAKRKAELKAKEDAEKAKKDAKRKELEQF. Positions 42-86 are enriched in basic and acidic residues; sequence EEKKKKEAKLQEAKRKAELKAKEDAEKAKKDAKRKELEQFDQLDE. Over residues 269 to 285 the composition is skewed to acidic residues; that stretch reads DDMDDGQFDDLDDDDFM.

Belongs to the eIF-3 subunit J family. Component of the eukaryotic translation initiation factor 3 (eIF-3) complex.

The protein resides in the cytoplasm. Its function is as follows. Component of the eukaryotic translation initiation factor 3 (eIF-3) complex, which is involved in protein synthesis of a specialized repertoire of mRNAs and, together with other initiation factors, stimulates binding of mRNA and methionyl-tRNAi to the 40S ribosome. The eIF-3 complex specifically targets and initiates translation of a subset of mRNAs involved in cell proliferation. This is Eukaryotic translation initiation factor 3 subunit J from Candida albicans (strain SC5314 / ATCC MYA-2876) (Yeast).